Reading from the N-terminus, the 383-residue chain is Lipid-A-disaccharide synthase (383 aa).

The protein belongs to the LpxB family.

It carries out the reaction a lipid X + a UDP-2-N,3-O-bis[(3R)-3-hydroxyacyl]-alpha-D-glucosamine = a lipid A disaccharide + UDP + H(+). Its pathway is bacterial outer membrane biogenesis; LPS lipid A biosynthesis. Functionally, condensation of UDP-2,3-diacylglucosamine and 2,3-diacylglucosamine-1-phosphate to form lipid A disaccharide, a precursor of lipid A, a phosphorylated glycolipid that anchors the lipopolysaccharide to the outer membrane of the cell. The polypeptide is Lipid-A-disaccharide synthase (Myxococcus xanthus (strain DK1622)).